Here is a 414-residue protein sequence, read N- to C-terminus: Serine/threonine transporter SstT (414 aa).

The next 8 membrane-spanning stretches (helical) occupy residues 22–42 (GLVLGIVVALISAPLQETIGF), 54–74 (IFVKALRAVAPILIFFLVMAA), 89–109 (IIVLYLLGTFLAAFVAVIAGF), 148–168 (AIFKANFIGVLAWSIGLGLAL), 189–209 (IVHVIISFAPFGVFGLVAETL), 223–243 (LLAVLIGTMLFTAFVVNPILV), 305–325 (MAGAAITITILTLAAVHTLGL), and 337–357 (IVAALCACGASGVAGGSLLLI).

Belongs to the dicarboxylate/amino acid:cation symporter (DAACS) (TC 2.A.23) family.

The protein localises to the cell inner membrane. It catalyses the reaction L-serine(in) + Na(+)(in) = L-serine(out) + Na(+)(out). The enzyme catalyses L-threonine(in) + Na(+)(in) = L-threonine(out) + Na(+)(out). In terms of biological role, involved in the import of serine and threonine into the cell, with the concomitant import of sodium (symport system). This Haemophilus influenzae (strain PittEE) protein is Serine/threonine transporter SstT.